The chain runs to 432 residues: 3-phosphoshikimate 1-carboxyvinyltransferase (432 aa).

3-phosphoshikimate contacts are provided by Lys23, Ser24, and Arg28. Lys23 contacts phosphoenolpyruvate. Positions 99 and 127 each coordinate phosphoenolpyruvate. Ser172, Ser173, Gln174, Ser200, Asp317, Asn341, and Lys345 together coordinate 3-phosphoshikimate. Gln174 lines the phosphoenolpyruvate pocket. Asp317 functions as the Proton acceptor in the catalytic mechanism. Phosphoenolpyruvate is bound by residues Arg349, Arg391, and Lys416.

The protein belongs to the EPSP synthase family. Monomer.

The protein localises to the cytoplasm. The catalysed reaction is 3-phosphoshikimate + phosphoenolpyruvate = 5-O-(1-carboxyvinyl)-3-phosphoshikimate + phosphate. It participates in metabolic intermediate biosynthesis; chorismate biosynthesis; chorismate from D-erythrose 4-phosphate and phosphoenolpyruvate: step 6/7. Its function is as follows. Catalyzes the transfer of the enolpyruvyl moiety of phosphoenolpyruvate (PEP) to the 5-hydroxyl of shikimate-3-phosphate (S3P) to produce enolpyruvyl shikimate-3-phosphate and inorganic phosphate. The protein is 3-phosphoshikimate 1-carboxyvinyltransferase of Blochmanniella pennsylvanica (strain BPEN).